The primary structure comprises 213 residues: ATP-dependent dethiobiotin synthetase BioD 2 (213 aa).

Residue D13 to I18 participates in ATP binding. A Mg(2+)-binding site is contributed by T17. Residue K38 is part of the active site. T42 is a substrate binding site. ATP is bound by residues D50 and E115–G118. Positions 50 and 115 each coordinate Mg(2+).

This sequence belongs to the dethiobiotin synthetase family. Homodimer. It depends on Mg(2+) as a cofactor.

The protein resides in the cytoplasm. It carries out the reaction (7R,8S)-7,8-diammoniononanoate + CO2 + ATP = (4R,5S)-dethiobiotin + ADP + phosphate + 3 H(+). The protein operates within cofactor biosynthesis; biotin biosynthesis; biotin from 7,8-diaminononanoate: step 1/2. Catalyzes a mechanistically unusual reaction, the ATP-dependent insertion of CO2 between the N7 and N8 nitrogen atoms of 7,8-diaminopelargonic acid (DAPA, also called 7,8-diammoniononanoate) to form a ureido ring. In Pasteurella multocida (strain Pm70), this protein is ATP-dependent dethiobiotin synthetase BioD 2.